Reading from the N-terminus, the 1094-residue chain is Probable arabinosyltransferase C (1094 aa).

The next 13 membrane-spanning stretches (helical) occupy residues 28 to 50, 232 to 251, 264 to 286, 341 to 360, 373 to 392, 431 to 453, 466 to 488, 530 to 552, 565 to 582, 586 to 608, 620 to 642, 657 to 679, and 700 to 722; these read IARY…TPLL, AAMI…LHIL, PARW…WWHF, SIWM…WVIS, TSRA…WLPL, IGAL…LVAI, RFGV…IPIF, SIAR…AMSL, SRRI…MMFT, WTHH…AVAV, TVFA…GWWY, WRWS…AAWF, and LAGI…EVVS. The segment covering 817-831 has biased composition (low complexity); sequence GSEPGTEGGTTAAPG. The interval 817–836 is disordered; the sequence is GSEPGTEGGTTAAPGINGSR.

Belongs to the emb family.

It is found in the cell membrane. Arabinosyl transferase responsible for the polymerization of arabinose into the arabinan of arabinogalactan. The polypeptide is Probable arabinosyltransferase C (embC) (Mycobacterium bovis (strain ATCC BAA-935 / AF2122/97)).